An 83-amino-acid polypeptide reads, in one-letter code: Cytochrome b559 subunit alpha (83 aa).

A helical membrane pass occupies residues Val-21 to Trp-35. His-23 provides a ligand contact to heme.

The protein belongs to the PsbE/PsbF family. In terms of assembly, heterodimer of an alpha subunit and a beta subunit. PSII is composed of 1 copy each of membrane proteins PsbA, PsbB, PsbC, PsbD, PsbE, PsbF, PsbH, PsbI, PsbJ, PsbK, PsbL, PsbM, PsbT, PsbX, PsbY, PsbZ, Psb30/Ycf12, at least 3 peripheral proteins of the oxygen-evolving complex and a large number of cofactors. It forms dimeric complexes. Heme b serves as cofactor.

Its subcellular location is the plastid. It is found in the chloroplast thylakoid membrane. In terms of biological role, this b-type cytochrome is tightly associated with the reaction center of photosystem II (PSII). PSII is a light-driven water:plastoquinone oxidoreductase that uses light energy to abstract electrons from H(2)O, generating O(2) and a proton gradient subsequently used for ATP formation. It consists of a core antenna complex that captures photons, and an electron transfer chain that converts photonic excitation into a charge separation. The polypeptide is Cytochrome b559 subunit alpha (Adiantum capillus-veneris (Maidenhair fern)).